The following is a 322-amino-acid chain: Olfactory receptor 1J1 (322 aa).

Over 1–25 (MSPENQSSVSEFLLLGLPIRPEQQA) the chain is Extracellular. The N-linked (GlcNAc...) asparagine glycan is linked to Asn-5. The chain crosses the membrane as a helical span at residues 26–49 (VFFALFLGMYLTTVLGNLLIMLLI). The Cytoplasmic segment spans residues 50 to 57 (QLDSHLHT). A helical transmembrane segment spans residues 58–79 (PMYFFLSHLALTDISFSSVTVP). The Extracellular segment spans residues 80-100 (KMLMNMQTQHLAVFYKGCISQ). Cys-97 and Cys-189 are oxidised to a cystine. A helical membrane pass occupies residues 101–120 (TYFFIFFADLDSFLITSMAY). Residues 121 to 139 (DRYVAICHPLHYATIMTQS) are Cytoplasmic-facing. The helical transmembrane segment at 140–158 (QCVMLVAGSWVIACACALL) threads the bilayer. Residues 159-196 (HTLLLAQLSFCADHIIPHYFCDLGALLKLSCSDTSLNQ) are Extracellular-facing. The helical transmembrane segment at 197 to 219 (LAIFTAALTAIMLPFLCILVSYG) threads the bilayer. The Cytoplasmic segment spans residues 220-236 (HIGVTILQIPSTKGICK). Residues 237–259 (ALSTCGSHLSVVTIYYRTIIGLY) form a helical membrane-spanning segment. At 260–272 (FLPPSSNTNDKNI) the chain is on the extracellular side. Residues 273–292 (IASVIYTAVTPMLNPFIYSL) form a helical membrane-spanning segment. Residues 293-322 (RNKDIKGALRKLLSRSGAVAHACNLNTLGG) are Cytoplasmic-facing.

Belongs to the G-protein coupled receptor 1 family.

The protein localises to the cell membrane. Functionally, odorant receptor. This Homo sapiens (Human) protein is Olfactory receptor 1J1.